The chain runs to 778 residues: Kin of IRRE-like protein 3 (778 aa).

The first 21 residues, 1–21, serve as a signal peptide directing secretion; the sequence is MKPFQLDLLFVCFFLFSQELG. The Extracellular portion of the chain corresponds to 22 to 535; the sequence is LQKRGCCLVL…GLEAESVPMA (514 aa). 5 Ig-like C2-type domains span residues 48–142, 147–243, 249–330, 335–415, and 419–515; these read YSFS…ARLT, PDDP…TSVT, PPLV…RTVD, PRMT…VTLT, and PPII…IRLK. Cysteine 69 and cysteine 127 are joined by a disulfide. N-linked (GlcNAc...) asparagine glycosylation occurs at asparagine 167. Residues cysteine 170 and cysteine 227 are joined by a disulfide bond. N-linked (GlcNAc...) asparagine glycosylation is present at asparagine 253. An intrachain disulfide couples cysteine 271 to cysteine 314. N-linked (GlcNAc...) asparagine glycosylation is present at asparagine 324. Intrachain disulfides connect cysteine 356-cysteine 398 and cysteine 440-cysteine 499. A glycan (N-linked (GlcNAc...) asparagine) is linked at asparagine 498. The helical transmembrane segment at 536 to 556 threads the bilayer; the sequence is VIIGVAVGAGVAFLVLMATIV. The Cytoplasmic segment spans residues 557–778; it reads AFCCARSQRN…PLQRRMQTHV (222 aa). A compositionally biased stretch (polar residues) spans 727–736; that stretch reads CDSSVSSSGK. The tract at residues 727–778 is disordered; the sequence is CDSSVSSSGKQDGYVQFDKASKASASSSHHSQSSSQNSDPSRPLQRRMQTHV. Residues 748 to 762 are compositionally biased toward low complexity; it reads KASASSSHHSQSSSQ.

It belongs to the immunoglobulin superfamily. Homodimer; mediates homophilic interactions to promote cell adhesion. Interacts with NPHS1; forms heterodimers with NPHS1. Interacts with NPHS2/podocin (via the C-terminus). Interacts with CASK. Interacts (via extracellular region) with MAP1B. Interacts (via extracellular region) with MYO16. Interacts (via intracellular region) with ATP1B1. Interacts (via intracellular region) with SHMT2. Interacts (via intracellular region) with UFC1. In terms of processing, undergoes proteolysis by a metalloprotease and gives rise to a soluble form. In terms of tissue distribution, expressed in fetal and adult brain. Also expressed in kidney, specifically in podocytes of kidney glomeruli. Also expressed in skeletal muscle.

It is found in the cell membrane. The protein resides in the secreted. Synaptic adhesion molecule required for the formation of target-specific synapses. Required for formation of target-specific synapses at hippocampal mossy fiber synapses. Required for formation of mossy fiber filopodia, the synaptic structures connecting dentate granule and GABA neurons. Probably acts as a homophilic adhesion molecule that promotes trans-cellular interactions and stabilize mossy fiber filipodia contact and subsequent synapse formation. Required for the coalescence of vomeronasal sensory neuron axons. May be involved in the hematopoietic supportive capacity of stroma cells; the secreted extracellular domain is directly responsible for supporting hematopoietic stem cells. The chain is Kin of IRRE-like protein 3 from Homo sapiens (Human).